The sequence spans 408 residues: Substance-P receptor (408 aa).

Over Met1–Gln32 the chain is Extracellular. 4 N-linked (GlcNAc...) asparagine glycosylation sites follow: Asn4, Asn9, Asn14, and Asn19. Residues Ile33 to Met55 traverse the membrane as a helical segment. Residues Trp56–Arg65 lie on the Cytoplasmic side of the membrane. A helical membrane pass occupies residues Thr66 to Thr87. The Extracellular portion of the chain corresponds to Val88–Lys107. Residues Cys106 and Cys181 are joined by a disulfide bond. A helical membrane pass occupies residues Phe108–Leu129. Over Asp130–Lys149 the chain is Cytoplasmic. The helical transmembrane segment at Ile150–Ala170 threads the bilayer. At Asp171 to Gln196 the chain is on the extracellular side. Residues Val197–Ile221 traverse the membrane as a helical segment. At Gly222 to Lys250 the chain is on the cytoplasmic side. Residues Met251–Leu272 form a helical membrane-spanning segment. Over Gln273–Tyr283 the chain is Extracellular. A helical membrane pass occupies residues Gln284 to Leu308. The Cytoplasmic segment spans residues Asn309 to Ala408. Residue Cys323 is the site of S-palmitoyl cysteine attachment. Residues Asp366–Ala408 form a disordered region. Positions Asp382 to Ala408 are enriched in polar residues.

This sequence belongs to the G-protein coupled receptor 1 family.

Its subcellular location is the cell membrane. This is a receptor for the tachykinin neuropeptide substance P. It is probably associated with G proteins that activate a phosphatidylinositol-calcium second messenger system. This Aquarana catesbeiana (American bullfrog) protein is Substance-P receptor (TACR1).